We begin with the raw amino-acid sequence, 545 residues long: CTP synthase (545 aa).

Positions 2–266 are amidoligase domain; the sequence is TTNYIFVTGG…DDYICKRFSL (265 aa). S14 provides a ligand contact to CTP. UTP is bound at residue S14. ATP-binding positions include 15–20 and D72; that span reads SLGKGI. Mg(2+) is bound by residues D72 and E140. CTP is bound by residues 147–149, 187–192, and K223; these read DIE and KTKPTQ. Residues 187 to 192 and K223 contribute to the UTP site; that span reads KTKPTQ. 239 to 241 contacts ATP; that stretch reads KDV. One can recognise a Glutamine amidotransferase type-1 domain in the interval 291–542; sequence TIGMVGKYIE…VKAANEHQKR (252 aa). Residue G352 participates in L-glutamine binding. C379 serves as the catalytic Nucleophile; for glutamine hydrolysis. Residues 380–383, E403, and R470 each bind L-glutamine; that span reads LGMQ. Active-site residues include H515 and E517.

This sequence belongs to the CTP synthase family. In terms of assembly, homotetramer.

The enzyme catalyses UTP + L-glutamine + ATP + H2O = CTP + L-glutamate + ADP + phosphate + 2 H(+). It carries out the reaction L-glutamine + H2O = L-glutamate + NH4(+). It catalyses the reaction UTP + NH4(+) + ATP = CTP + ADP + phosphate + 2 H(+). It participates in pyrimidine metabolism; CTP biosynthesis via de novo pathway; CTP from UDP: step 2/2. Allosterically activated by GTP, when glutamine is the substrate; GTP has no effect on the reaction when ammonia is the substrate. The allosteric effector GTP functions by stabilizing the protein conformation that binds the tetrahedral intermediate(s) formed during glutamine hydrolysis. Inhibited by the product CTP, via allosteric rather than competitive inhibition. Functionally, catalyzes the ATP-dependent amination of UTP to CTP with either L-glutamine or ammonia as the source of nitrogen. Regulates intracellular CTP levels through interactions with the four ribonucleotide triphosphates. The chain is CTP synthase from Salmonella typhi.